A 118-amino-acid polypeptide reads, in one-letter code: Holo-[acyl-carrier-protein] synthase (118 aa).

Residues Asp8 and Glu58 each contribute to the Mg(2+) site.

The protein belongs to the P-Pant transferase superfamily. AcpS family. Mg(2+) serves as cofactor.

It is found in the cytoplasm. The enzyme catalyses apo-[ACP] + CoA = holo-[ACP] + adenosine 3',5'-bisphosphate + H(+). Transfers the 4'-phosphopantetheine moiety from coenzyme A to a Ser of acyl-carrier-protein. This is Holo-[acyl-carrier-protein] synthase from Streptococcus equi subsp. zooepidemicus (strain MGCS10565).